Reading from the N-terminus, the 217-residue chain is MSREMISIKGTRNGLVFFLDPTREFEEIKNTLLSKMESARGFFKGAKFSISHGQKDMPVEQKNELVNICRRYGLIPNNDDAAVPANAVSKASPRATRAASNSKPTIGENALMVRRSLRSGQCISYPGHVVVIGDVHPGAEVISGGNVLVMGSCRGLIHAGAGGNLMAKVVALRLAPTVLSIAGQRYAPEHPSAIPPGCQVARLSGQEIIFEKFQAAR.

It belongs to the MinC family. Interacts with MinD and FtsZ.

Cell division inhibitor that blocks the formation of polar Z ring septums. Rapidly oscillates between the poles of the cell to destabilize FtsZ filaments that have formed before they mature into polar Z rings. Prevents FtsZ polymerization. This chain is Probable septum site-determining protein MinC, found in Pelotomaculum thermopropionicum (strain DSM 13744 / JCM 10971 / SI).